The primary structure comprises 281 residues: 3-methyl-2-oxobutanoate hydroxymethyltransferase (281 aa).

Residues Asp49 and Asp88 each coordinate Mg(2+). Residues 49 to 50 (DS), Asp88, and Lys118 each bind 3-methyl-2-oxobutanoate. Glu120 contacts Mg(2+). Residue Glu186 is the Proton acceptor of the active site.

The protein belongs to the PanB family. In terms of assembly, homodecamer; pentamer of dimers. Mg(2+) is required as a cofactor.

It is found in the cytoplasm. The enzyme catalyses 3-methyl-2-oxobutanoate + (6R)-5,10-methylene-5,6,7,8-tetrahydrofolate + H2O = 2-dehydropantoate + (6S)-5,6,7,8-tetrahydrofolate. Its pathway is cofactor biosynthesis; (R)-pantothenate biosynthesis; (R)-pantoate from 3-methyl-2-oxobutanoate: step 1/2. Catalyzes the reversible reaction in which hydroxymethyl group from 5,10-methylenetetrahydrofolate is transferred onto alpha-ketoisovalerate to form ketopantoate. This Chelativorans sp. (strain BNC1) protein is 3-methyl-2-oxobutanoate hydroxymethyltransferase.